The following is a 473-amino-acid chain: Rop guanine nucleotide exchange factor 3 (473 aa).

Residues 1 to 28 form a disordered region; the sequence is MENLSNPDENDDHQSPRSIDQNDQSAVE. The span at 16 to 28 shows a compositional bias: polar residues; it reads PRSIDQNDQSAVE. One can recognise a PRONE domain in the interval 95-473; the sequence is LVVQEISEPE…YVDKTMRGSE (379 aa).

Guanine-nucleotide exchange factor (GEF) that acts as an activator of Rop (Rho of plants) GTPases by promoting the exchange of GDP for GTP. This chain is Rop guanine nucleotide exchange factor 3 (ROPGEF3), found in Arabidopsis thaliana (Mouse-ear cress).